The sequence spans 116 residues: Large ribosomal subunit protein bL17 (116 aa).

This sequence belongs to the bacterial ribosomal protein bL17 family. As to quaternary structure, part of the 50S ribosomal subunit. Contacts protein L32.

This Trichodesmium erythraeum (strain IMS101) protein is Large ribosomal subunit protein bL17.